The following is a 343-amino-acid chain: Heat-inducible transcription repressor HrcA (343 aa).

This sequence belongs to the HrcA family.

Its function is as follows. Negative regulator of class I heat shock genes (grpE-dnaK-dnaJ and groELS operons). Prevents heat-shock induction of these operons. The sequence is that of Heat-inducible transcription repressor HrcA from Thermoanaerobacter pseudethanolicus (strain ATCC 33223 / 39E) (Clostridium thermohydrosulfuricum).